A 319-amino-acid polypeptide reads, in one-letter code: Ribosomal RNA small subunit methyltransferase H (319 aa).

S-adenosyl-L-methionine is bound by residues Gly37–Tyr39, Asp57, Phe96, Asp105, and Gln112. The segment covering Arg292 to Pro302 has biased composition (basic and acidic residues). A disordered region spans residues Arg292–Ala319.

The protein belongs to the methyltransferase superfamily. RsmH family.

Its subcellular location is the cytoplasm. The enzyme catalyses cytidine(1402) in 16S rRNA + S-adenosyl-L-methionine = N(4)-methylcytidine(1402) in 16S rRNA + S-adenosyl-L-homocysteine + H(+). Its function is as follows. Specifically methylates the N4 position of cytidine in position 1402 (C1402) of 16S rRNA. The polypeptide is Ribosomal RNA small subunit methyltransferase H (Syntrophobacter fumaroxidans (strain DSM 10017 / MPOB)).